Consider the following 357-residue polypeptide: MSIVEQLQRQHLKQLTPYASARRSMSGGNIWLNANESPYSNSYTVDDSKLNRYPEFQSKPLNQAYAEYAGINASKVLSSRGSDEGIELLIRAFCEPGQDKVLICPPTYGMYAISAKTFAVGVTEVPLLNSGEVNNWQLDTESIIEAAAECKVIFLCSPSNPLGNALNTDDIEQVLQHSPRSIVVVDEAYIEFSSGDSVVSWLERYPNLVVLRTLSKAFALAGIRCGFLLANDDIIELLQKVLAPYPLPDPTVQIAVQALQTSSLERLQQQVATLLAERDRVQTALEQTPLTLVSESDTNFLLYQCEDAAGLVKSLTDNDLLIRNQSAQRGLENVVRITIGSAAENDELIQQLKDYFS.

Position 216 is an N6-(pyridoxal phosphate)lysine (Lys216).

It belongs to the class-II pyridoxal-phosphate-dependent aminotransferase family. Histidinol-phosphate aminotransferase subfamily. Homodimer. Pyridoxal 5'-phosphate is required as a cofactor.

The enzyme catalyses L-histidinol phosphate + 2-oxoglutarate = 3-(imidazol-4-yl)-2-oxopropyl phosphate + L-glutamate. The protein operates within amino-acid biosynthesis; L-histidine biosynthesis; L-histidine from 5-phospho-alpha-D-ribose 1-diphosphate: step 7/9. The sequence is that of Histidinol-phosphate aminotransferase 2 from Idiomarina loihiensis (strain ATCC BAA-735 / DSM 15497 / L2-TR).